The chain runs to 106 residues: MIITTTEQVPGYRVKEILGVVCGNVVMSKHLGKDIAAAFKTLAGGEIKGYTEMLTEARNIALERMIKEAEKLGADAVIGFRYSSSTIMSGAAEILAYGTAVKLEKI.

The protein belongs to the UPF0145 family.

The polypeptide is UPF0145 protein Tpet_0165 (Thermotoga petrophila (strain ATCC BAA-488 / DSM 13995 / JCM 10881 / RKU-1)).